Consider the following 205-residue polypeptide: Phosphoribosyl-dephospho-CoA transferase (205 aa).

Catalysis depends on residues aspartate 134 and aspartate 136.

The protein belongs to the MdcG family.

The enzyme catalyses apo-[malonate decarboxylase ACP] + 2'-(5''-triphospho-alpha-D-ribosyl)-3'-dephospho-CoA = holo-[malonate decarboxylase ACP] + diphosphate. Its function is as follows. Transfers 2'-(5-triphosphoribosyl)-3'-dephosphocoenzyme-A to the apo-[acyl-carrier-protein] of the malonate decarboxylase to yield holo-[acyl-carrier-protein]. In Klebsiella pneumoniae subsp. pneumoniae (strain ATCC 700721 / MGH 78578), this protein is Phosphoribosyl-dephospho-CoA transferase.